We begin with the raw amino-acid sequence, 166 residues long: Disulfide bond formation protein B (166 aa).

At 1–10 (MGLNITNRQG) the chain is on the cytoplasmic side. A helical transmembrane segment spans residues 11-27 (FLLVAAACAGAIGFALF). Residues 28-45 (AQYQLGEEPCPLCILQRI) are Periplasmic-facing. An intrachain disulfide couples cysteine 37 to cysteine 40. A helical transmembrane segment spans residues 46 to 62 (GVMAVGALALLAALHNP). At 63–69 (GKTGAKV) the chain is on the cytoplasmic side. A helical membrane pass occupies residues 70–86 (WGGLMTLAALSGAGVSL). The Periplasmic segment spans residues 87 to 143 (RQLWLQSLPADQVPQCGPGLEFLMESFPLWEVLSKVLKGSGECAAIQGRFLGMTMPF). Cysteine 102 and cysteine 129 form a disulfide bridge. The chain crosses the membrane as a helical span at residues 144-162 (WVAVFFAGVIVWTLWLVGR). At 163–166 (RRRG) the chain is on the cytoplasmic side.

This sequence belongs to the DsbB family.

The protein localises to the cell inner membrane. In terms of biological role, required for disulfide bond formation in some periplasmic proteins. Acts by oxidizing the DsbA protein. The chain is Disulfide bond formation protein B from Chromobacterium violaceum (strain ATCC 12472 / DSM 30191 / JCM 1249 / CCUG 213 / NBRC 12614 / NCIMB 9131 / NCTC 9757 / MK).